The following is a 197-amino-acid chain: Recombination protein RecR (197 aa).

The segment at 57-72 (CSVCFAITEDDPCWIC) adopts a C4-type zinc-finger fold. A Toprim domain is found at 79–174 (GTICVVEEPQ…KVTRLAHGIP (96 aa)).

The protein belongs to the RecR family.

Functionally, may play a role in DNA repair. It seems to be involved in an RecBC-independent recombinational process of DNA repair. It may act with RecF and RecO. This chain is Recombination protein RecR, found in Citrifermentans bemidjiense (strain ATCC BAA-1014 / DSM 16622 / JCM 12645 / Bem) (Geobacter bemidjiensis).